Reading from the N-terminus, the 213-residue chain is Ribosomal RNA large subunit methyltransferase E (213 aa).

S-adenosyl-L-methionine contacts are provided by Gly-68, Trp-70, Asp-88, Asp-104, and Asp-127. The active-site Proton acceptor is Lys-167.

This sequence belongs to the class I-like SAM-binding methyltransferase superfamily. RNA methyltransferase RlmE family.

The protein resides in the cytoplasm. It catalyses the reaction uridine(2552) in 23S rRNA + S-adenosyl-L-methionine = 2'-O-methyluridine(2552) in 23S rRNA + S-adenosyl-L-homocysteine + H(+). Its function is as follows. Specifically methylates the uridine in position 2552 of 23S rRNA at the 2'-O position of the ribose in the fully assembled 50S ribosomal subunit. The protein is Ribosomal RNA large subunit methyltransferase E of Neorickettsia sennetsu (strain ATCC VR-367 / Miyayama) (Ehrlichia sennetsu).